Reading from the N-terminus, the 188-residue chain is Peptide deformylase (188 aa).

Residues Cys109 and His152 each coordinate Fe cation. Glu153 is an active-site residue. A Fe cation-binding site is contributed by His156.

Belongs to the polypeptide deformylase family. Fe(2+) is required as a cofactor.

It catalyses the reaction N-terminal N-formyl-L-methionyl-[peptide] + H2O = N-terminal L-methionyl-[peptide] + formate. Its function is as follows. Removes the formyl group from the N-terminal Met of newly synthesized proteins. Requires at least a dipeptide for an efficient rate of reaction. N-terminal L-methionine is a prerequisite for activity but the enzyme has broad specificity at other positions. The sequence is that of Peptide deformylase from Chloroflexus aurantiacus (strain ATCC 29366 / DSM 635 / J-10-fl).